The chain runs to 153 residues: Histone H2B.6 (153 aa).

2 stretches are compositionally biased toward basic and acidic residues: residues 1–28 (MAPK…EKAP) and 36–53 (EKRL…EGKK). The interval 1-60 (MAPKAEKKPAAKKPAEEEPAAEKAEKAPAGKKPKAEKRLPAGKGEKGSGEGKKAGRKKGK) is disordered. Residues K7 and K37 each carry the N6-acetyllysine modification. A Glycyl lysine isopeptide (Lys-Gly) (interchain with G-Cter in ubiquitin) cross-link involves residue K149.

This sequence belongs to the histone H2B family. As to quaternary structure, the nucleosome is a histone octamer containing two molecules each of H2A, H2B, H3 and H4 assembled in one H3-H4 heterotetramer and two H2A-H2B heterodimers. The octamer wraps approximately 147 bp of DNA. In terms of processing, can be acetylated to form H2BK6ac and H2BK33ac. Post-translationally, monoubiquitinated by BRE1 to form H2BK143ub1 and deubiquitinated by UBP26. Required for heterochromatic histone H3 di- and trimethylation at H3K4me. May give a specific tag for epigenetic transcriptional activation.

The protein localises to the nucleus. The protein resides in the chromosome. Its function is as follows. Core component of nucleosome. Nucleosomes wrap and compact DNA into chromatin, limiting DNA accessibility to the cellular machineries which require DNA as a template. Histones thereby play a central role in transcription regulation, DNA repair, DNA replication and chromosomal stability. DNA accessibility is regulated via a complex set of post-translational modifications of histones, also called histone code, and nucleosome remodeling. This is Histone H2B.6 (H2B.6) from Oryza sativa subsp. indica (Rice).